Here is a 570-residue protein sequence, read N- to C-terminus: Low-affinity glucose transporter HXT1 (570 aa).

The span at 1–20 shows a compositional bias: polar residues; that stretch reads MNSTPDLISPQKSNSSNSYE. The disordered stretch occupies residues 1-51; that stretch reads MNSTPDLISPQKSNSSNSYELESGRSKAMNTPEGKNESFHDNLSESQVQPA. The Cytoplasmic portion of the chain corresponds to 1 to 60; that stretch reads MNSTPDLISPQKSNSSNSYELESGRSKAMNTPEGKNESFHDNLSESQVQPAVAPPNTGKG. 3 positions are modified to phosphoserine: serine 23, serine 38, and serine 44. The span at 34 to 43 shows a compositional bias: basic and acidic residues; sequence GKNESFHDNL. A helical transmembrane segment spans residues 61–81; sequence VYVTVSICCVMVAFGGFIFGW. At 82-116 the chain is on the extracellular side; the sequence is DTGTISGFVAQTDFLRRFGMKHHDGSHYLSKVRTG. Residues 117–137 form a helical membrane-spanning segment; the sequence is LIVSIFNIGCAIGGIVLAKLG. At 138-143 the chain is on the cytoplasmic side; the sequence is DMYGRR. The helical transmembrane segment at 144–164 threads the bilayer; that stretch reads IGLIVVVVIYTIGIIIQIASI. Residues 165–174 are Extracellular-facing; it reads NKWYQYFIGR. A helical transmembrane segment spans residues 175–195; that stretch reads IISGLGVGGITVLSPMLISEV. The Cytoplasmic segment spans residues 196–201; sequence APSEMR. Residues 202 to 222 traverse the membrane as a helical segment; sequence GTLVSCYQVMITLGIFLGYCT. The Extracellular portion of the chain corresponds to 223–236; the sequence is NFGTKNYSNSVQWR. N-linked (GlcNAc...) asparagine glycosylation occurs at asparagine 228. The chain crosses the membrane as a helical span at residues 237–257; that stretch reads VPLGLCFAWALFMIGGMMFVP. Topologically, residues 258-340 are cytoplasmic; sequence ESPRYLVEAG…IQSLQQLTGD (83 aa). The helical transmembrane segment at 341–357 threads the bilayer; the sequence is NYFFYYGTIVFQAVGLS. Over 358–363 the chain is Extracellular; the sequence is DSFETS. Residues 364–381 form a helical membrane-spanning segment; the sequence is IVFGVVNFFSTCCSLYTV. Residues 382–388 lie on the Cytoplasmic side of the membrane; that stretch reads DRFGRRN. A helical membrane pass occupies residues 389 to 409; the sequence is CLMWGAVGMVCCYVVYASVGV. The Extracellular portion of the chain corresponds to 410 to 431; the sequence is TRLWPNGQDQPSSKGAGNCMIV. Residues 432-452 traverse the membrane as a helical segment; it reads FACFYIFCFATTWAPIAYVVI. At 453-469 the chain is on the cytoplasmic side; the sequence is SECFPLRVKSKCMSIAS. Residues 470 to 490 form a helical membrane-spanning segment; the sequence is AANWIWGFLISFFTPFITGAI. Residue asparagine 491 is a topological domain, extracellular. The helical transmembrane segment at 492-512 threads the bilayer; the sequence is FYYGYVFMGCMVFAYFYVFFF. Residues 513–570 lie on the Cytoplasmic side of the membrane; the sequence is VPETKGLSLEEVNDMYAEGVLPWKSASWVPVSKRGADYNADDLMHDDQPFYKSLFSRK.

It belongs to the major facilitator superfamily. Sugar transporter (TC 2.A.1.1) family.

Its subcellular location is the membrane. In terms of biological role, low-affinity glucose transporter. HXT1 is as well involved in the transport of mannose. This Saccharomyces cerevisiae (strain ATCC 204508 / S288c) (Baker's yeast) protein is Low-affinity glucose transporter HXT1 (HXT1).